A 600-amino-acid chain; its full sequence is Kynurenine 3-monooxygenase (600 aa).

Residues 217 to 242 (GDSCADEPSGCGGRKQATTKSQGSEY) form a disordered region.

The protein belongs to the aromatic-ring hydroxylase family. KMO subfamily. Requires FAD as cofactor.

Its subcellular location is the mitochondrion outer membrane. It catalyses the reaction L-kynurenine + NADPH + O2 + H(+) = 3-hydroxy-L-kynurenine + NADP(+) + H2O. Its pathway is cofactor biosynthesis; NAD(+) biosynthesis; quinolinate from L-kynurenine: step 1/3. Its function is as follows. Catalyzes the hydroxylation of L-kynurenine (L-Kyn) to form 3-hydroxy-L-kynurenine (L-3OHKyn). Required for synthesis of quinolinic acid. The sequence is that of Kynurenine 3-monooxygenase from Mycosarcoma maydis (Corn smut fungus).